The following is a 640-amino-acid chain: Dextranase (640 aa).

The first 32 residues, 1–32 (MPGTGLGRLAKHVTAAAAVFLISTGAVLPAQA), serve as a signal peptide directing secretion.

The protein belongs to the glycosyl hydrolase 49 family.

It localises to the secreted. It carries out the reaction Endohydrolysis of (1-&gt;6)-alpha-D-glucosidic linkages in dextran.. In Arthrobacter globiformis, this protein is Dextranase.